A 101-amino-acid polypeptide reads, in one-letter code: Small ribosomal subunit protein bS18c (101 aa).

It belongs to the bacterial ribosomal protein bS18 family. As to quaternary structure, part of the 30S ribosomal subunit.

The protein localises to the plastid. It localises to the chloroplast. The chain is Small ribosomal subunit protein bS18c from Gossypium hirsutum (Upland cotton).